A 550-amino-acid polypeptide reads, in one-letter code: Palmdelphin (550 aa).

M1 carries the post-translational modification N-acetylmethionine. Positions 2–106 form a coiled coil; sequence EEAELVKERL…LQISTNEEAI (105 aa). K125 participates in a covalent cross-link: Glycyl lysine isopeptide (Lys-Gly) (interchain with G-Cter in SUMO2). S135 is subject to Phosphoserine. K179 is covalently cross-linked (Glycyl lysine isopeptide (Lys-Gly) (interchain with G-Cter in SUMO1); alternate). Residue K179 forms a Glycyl lysine isopeptide (Lys-Gly) (interchain with G-Cter in SUMO2); alternate linkage. The segment covering 248-259 has biased composition (basic and acidic residues); it reads ERNSKSPTEYHE. The interval 248 to 280 is disordered; that stretch reads ERNSKSPTEYHEPVYANPFCRPTTPQREKVTPG. Residue T271 is modified to Phosphothreonine. A phosphoserine mark is found at S321, S370, S384, and S385. 2 disordered regions span residues 356–393 and 463–528; these read VMQDKYTPSPKSGLSPSRALVEKSERQSSSPPCQEDEK and HPIA…IAGD. Residues 483–494 show a composition bias toward basic and acidic residues; it reads KRAEVNPHENTN. Phosphoserine occurs at positions 497, 514, and 519.

The protein belongs to the paralemmin family. In terms of assembly, interacts with GLUL. Phosphorylated.

The protein localises to the cytoplasm. It localises to the cell projection. It is found in the dendrite. Its subcellular location is the dendritic spine. This is Palmdelphin (PALMD) from Bos taurus (Bovine).